Reading from the N-terminus, the 427-residue chain is Thymidine phosphorylase (427 aa).

Belongs to the thymidine/pyrimidine-nucleoside phosphorylase family. Homodimer.

The enzyme catalyses thymidine + phosphate = 2-deoxy-alpha-D-ribose 1-phosphate + thymine. Functionally, the enzymes which catalyze the reversible phosphorolysis of pyrimidine nucleosides are involved in the degradation of these compounds and in their utilization as carbon and energy sources, or in the rescue of pyrimidine bases for nucleotide synthesis. The chain is Thymidine phosphorylase (deoA) from Mycobacterium tuberculosis (strain CDC 1551 / Oshkosh).